A 195-amino-acid polypeptide reads, in one-letter code: Protein GrpE (195 aa).

The segment at 1 to 30 (MSEQEKVEQEEISAELETQNEQEKPMEETE) is disordered. Over residues 10 to 20 (EEISAELETQN) the composition is skewed to acidic residues.

This sequence belongs to the GrpE family. Homodimer.

It is found in the cytoplasm. Its function is as follows. Participates actively in the response to hyperosmotic and heat shock by preventing the aggregation of stress-denatured proteins, in association with DnaK and GrpE. It is the nucleotide exchange factor for DnaK and may function as a thermosensor. Unfolded proteins bind initially to DnaJ; upon interaction with the DnaJ-bound protein, DnaK hydrolyzes its bound ATP, resulting in the formation of a stable complex. GrpE releases ADP from DnaK; ATP binding to DnaK triggers the release of the substrate protein, thus completing the reaction cycle. Several rounds of ATP-dependent interactions between DnaJ, DnaK and GrpE are required for fully efficient folding. The protein is Protein GrpE of Histophilus somni (strain 2336) (Haemophilus somnus).